We begin with the raw amino-acid sequence, 807 residues long: Glucocorticoid receptor (807 aa).

Disordered stretches follow at residues 1-47 (MDQG…LPSP), 246-284 (TDVNGTDQQHPLQHHQHQQQQHRHLLQHQQHQLHHQHQQ), and 412-438 (FSVSFSSSSPRTGENSSSAVPGLSKPS). Positions 1-444 (MDQGGLKRNC…SKPSGPTHKI (444 aa)) are modulating. Residues 257–282 (LQHHQHQQQQHRHLLQHQQHQLHHQH) are compositionally biased toward basic residues. A compositionally biased stretch (low complexity) spans 412-421 (FSVSFSSSSP). 2 NR C4-type zinc fingers span residues 445–465 (CLVCSDEASGCHYGVVTCGSC) and 490–514 (CAGRNDCIIDKIRRKNCPACRFRKC). Positions 445–519 (CLVCSDEASG…RFRKCLQAGM (75 aa)) form a DNA-binding region, nuclear receptor. Residues 520 to 553 (NLEARKNKKLIKMKVHRPTGSAEPISNMPVPVIP) are hinge. An NR LBD domain is found at 554-788 (RMPQLVPTML…FPEMLAEIIT (235 aa)).

The protein belongs to the nuclear hormone receptor family. NR3 subfamily. As to quaternary structure, heteromultimeric cytoplasmic complex with HSP90. Upon ligand binding the complex undergoes a conformation change and moves to the nucleus, where it dissociates. Binds to DNA as a homodimer, and as heterodimer with NR3C2. Interaction with numerous other transcription factors modulates transcription activation.

The protein localises to the cytoplasm. It localises to the nucleus. The protein resides in the mitochondrion. It is found in the cytoskeleton. Its subcellular location is the spindle. The protein localises to the microtubule organizing center. It localises to the centrosome. In terms of biological role, receptor for glucocorticoids (GC). Has a dual mode of action: as a transcription factor that binds to glucocorticoid response elements (GRE), both for nuclear and mitochondrial DNA, and as a modulator of other transcription factors. Affects inflammatory responses, cellular proliferation and differentiation in target tissues. Involved in chromatin remodeling. Plays a role in rapid mRNA degradation by binding to the 5' UTR of target mRNAs and interacting with PNRC2 in a ligand-dependent manner which recruits the RNA helicase UPF1 and the mRNA-decapping enzyme DCP1A, leading to RNA decay. Could act as a coactivator for STAT5-dependent transcription upon growth hormone (GH) stimulation and could reveal an essential role of hepatic GR in the control of body growth. Mediates glucocorticoid-induced apoptosis. Promotes accurate chromosome segregation during mitosis. May act as a tumor suppressor. May play a negative role in adipogenesis through the regulation of lipolytic and antilipogenic gene expression. This Paralichthys olivaceus (Bastard halibut) protein is Glucocorticoid receptor (nr3c1).